The primary structure comprises 83 residues: Kunitz-type serine protease inhibitor tigerin-3 (83 aa).

The first 24 residues, 1–24, serve as a signal peptide directing secretion; that stretch reads MSSGGLLLLLGLLTLWEILTPVSS. The 51-residue stretch at 31–81 folds into the BPTI/Kunitz inhibitor domain; the sequence is CHLPHDTGPCNRNTQAFYYNPVYHTCLKFIYGGCQGNSNNFKTIDECKRTC. Cystine bridges form between Cys31/Cys81, Cys40/Cys64, and Cys56/Cys77.

The protein belongs to the venom Kunitz-type family. As to expression, expressed by the venom gland.

It localises to the secreted. Functionally, serine protease inhibitor. The protein is Kunitz-type serine protease inhibitor tigerin-3 of Notechis scutatus scutatus (Mainland tiger snake).